We begin with the raw amino-acid sequence, 279 residues long: Ultraviolet N-glycosylase/AP lyase (279 aa).

The HhH domain occupies 123 to 142 (LEDLVALPGVGRKTAFVVLG). [4Fe-4S] cluster is bound by residues cysteine 203, cysteine 210, cysteine 213, and cysteine 219. Residues 256–279 (TAGAAGPRPRAGGXAPGLPAQPFR) form a disordered region.

The protein belongs to the Nth/MutY family. [4Fe-4S] cluster serves as cofactor.

In terms of biological role, DNA repair enzyme that has both DNA N-glycosylase activity and AP-lyase activity. Initiates repair at cis-syn pyrimidine dimers. Proceeds via an imino enzyme:DNA intermediate. In Micrococcus luteus (strain ATCC 4698 / DSM 20030 / JCM 1464 / CCM 169 / CCUG 5858 / IAM 1056 / NBRC 3333 / NCIMB 9278 / NCTC 2665 / VKM Ac-2230) (Micrococcus lysodeikticus), this protein is Ultraviolet N-glycosylase/AP lyase (pdg).